A 154-amino-acid polypeptide reads, in one-letter code: 17 kDa A-type inclusion protein (154 aa).

Residues 17 to 85 (QKDCSDKLDR…YKRELERDRY (69 aa)) adopt a coiled-coil conformation. A disordered region spans residues 88-154 (SRYLTSSSDP…DVEPEHPPAF (67 aa)).

This chain is 17 kDa A-type inclusion protein, found in Bos taurus (Bovine).